A 93-amino-acid chain; its full sequence is Putative ribosomal protein eL43-like (93 aa).

The C4-type zinc finger occupies 40–61 (CSFCGKTKMKRRAVKIRHCNSC).

The protein belongs to the eukaryotic ribosomal protein eL43 family.

The chain is Putative ribosomal protein eL43-like (RPL37AP8) from Homo sapiens (Human).